Reading from the N-terminus, the 275-residue chain is LDMGHMVNAIEQVDEFLDLGANAIEFDVDFDDDGVAKYTHHGIPCDCGRLCTKYAVLTEYLDYVRQVTTPGDPKFRKELVLLALDLKLQRISSEKAYAAGVDVATKLLDHYWMRGWNGGRAYILLNIPLVEDYEFIRAFKDTLRKEGHEQYNAKVGINFTGNEDLDEIREVLEKLGEDEHIWQADGITSCFPRGTERLKKALEKRDTPGYKYISKVYAWTLVRSSIMRRSLRLGVDGVMSNYPDRVVKVLKEKEFSDKFRLATYADNPWEKFTPI.

H5 is an active-site residue. Positions 25 and 27 each coordinate Mg(2+). The active-site Nucleophile is H41. 2 disulfide bridges follow: C45/C51 and C47/C190. Position 85 (D85) interacts with Mg(2+).

The protein belongs to the arthropod phospholipase D family. Class II subfamily. Mg(2+) is required as a cofactor. As to expression, expressed by the venom gland.

The protein resides in the secreted. The catalysed reaction is an N-(acyl)-sphingosylphosphocholine = an N-(acyl)-sphingosyl-1,3-cyclic phosphate + choline. It catalyses the reaction an N-(acyl)-sphingosylphosphoethanolamine = an N-(acyl)-sphingosyl-1,3-cyclic phosphate + ethanolamine. It carries out the reaction a 1-acyl-sn-glycero-3-phosphocholine = a 1-acyl-sn-glycero-2,3-cyclic phosphate + choline. The enzyme catalyses a 1-acyl-sn-glycero-3-phosphoethanolamine = a 1-acyl-sn-glycero-2,3-cyclic phosphate + ethanolamine. Dermonecrotic toxins cleave the phosphodiester linkage between the phosphate and headgroup of certain phospholipids (sphingolipid and lysolipid substrates), forming an alcohol (often choline) and a cyclic phosphate. This toxin acts on sphingomyelin (SM). It may also act on ceramide phosphoethanolamine (CPE), lysophosphatidylcholine (LPC) and lysophosphatidylethanolamine (LPE), but not on lysophosphatidylserine (LPS), and lysophosphatidylglycerol (LPG). It acts by transphosphatidylation, releasing exclusively cyclic phosphate products as second products. Induces dermonecrosis, hemolysis, increased vascular permeability, edema, inflammatory response, and platelet aggregation. In Sicarius peruensis (Six-eyed sand spider), this protein is Dermonecrotic toxin SpeSicTox-betaIIA2iii.